A 351-amino-acid chain; its full sequence is Auxin efflux carrier component 5 (351 aa).

Transmembrane regions (helical) follow at residues 7 to 27, 39 to 59, 71 to 91, 100 to 120, 132 to 152, 210 to 230, 234 to 254, 271 to 291, 295 to 315, and 329 to 349; these read VYKVIEAMVPLYVALILGYGS, CDAINRLVCYFTLPLFTIEFT, FIAADVLSKVIIVTVLALWAK, WSITSFSLCTLTNSLVVGVPL, LVVQSSVFQAIVWLTLLLFVL, ILGIAWAFISNRWHLELPGIL, ILIMSKAGTGTAMFNMGIFMA, MVLKFIAGPAAMAIGSIVLGL, VLRVAIIQAALPQSITSFIFA, and VIFGMLVSLPVLVAYYAALEF.

Belongs to the auxin efflux carrier (TC 2.A.69.1) family. Expressed in elongating parts of hypocotyl, cotyledon vasculature and guard cells. Detected in root pericycle and root tip and at later developmental stages in leaves, stems and flowers. Expressed in veins of mature leaves.

The protein resides in the endoplasmic reticulum membrane. The protein localises to the cell membrane. Its function is as follows. Auxin transporter regulating intracellular auxin homeostasis and metabolism. Mediates the auxin transport from the cytosol into the lumen of the endoplasmic reticulum. May also act as an auxin efflux carrier when located to the cell membrane. PIN5 and PIN8 may have an antagonistic/compensatory activity. Involved in unfolded protein response (UPR) activation. Involved in the control of vein patterning. Promotes vein formation. PIN5, PIN6, and PIN8 control vein network geometry, but they are expressed in mutually exclusive domains of leaf vascular cells. The sequence is that of Auxin efflux carrier component 5 from Arabidopsis thaliana (Mouse-ear cress).